Here is a 962-residue protein sequence, read N- to C-terminus: UBP9-binding protein bun107 (962 aa).

WD repeat units lie at residues 25 to 69 (DANC…GKAS), 77 to 116 (AHSA…ASCL), 121 to 162 (EHTD…EVMR), 172 to 211 (VVGP…RITD), 214 to 253 (GHTD…CLFS), and 302 to 339 (KQDA…NQDV). Residues 568–578 (SPLRIRSRPSP) are compositionally biased toward low complexity. Disordered regions lie at residues 568–615 (SPLR…QIPS) and 702–758 (RAAS…PREL). Residues 707–723 (RVFSTGTSVTSPQALSK) show a composition bias toward polar residues. Serine 717 bears the Phosphoserine mark. Positions 724-738 (TNNTVNNAANTENNT) are enriched in low complexity.

Interacts with ubp9 and bun62.

It localises to the cytoplasm. It is found in the cell tip. In terms of biological role, required for the ubp9 recruitment to septa and cell tips but also for its enzymatic activity at these specific locations. The chain is UBP9-binding protein bun107 (bun107) from Schizosaccharomyces pombe (strain 972 / ATCC 24843) (Fission yeast).